A 242-amino-acid polypeptide reads, in one-letter code: Dehydration-responsive element-binding protein 1J (242 aa).

The span at 20–29 (SSATTAATAT) shows a compositional bias: low complexity. Residues 20–44 (SSATTAATATGPASPKRPAGRTKFQ) form a disordered region. Positions 50–109 (VFRGVRRRGRAGRWVCEVRVPGSRGDRLWVGTFDTAEEAARAHDAAMLAMCGASASLNFT) form a DNA-binding region, AP2/ERF. The segment at 143–184 (FQRRGSTAATATATSGDAASTAPPSSSPVLSPNDDNASSAST) is disordered. Over residues 148 to 184 (STAATATATSGDAASTAPPSSSPVLSPNDDNASSAST) the composition is skewed to low complexity.

It belongs to the AP2/ERF transcription factor family. ERF subfamily.

It localises to the nucleus. Its function is as follows. Transcriptional activator that binds specifically to the DNA sequence 5'-[AG]CCGAC-3'. Binding to the C-repeat/DRE element mediates high salinity- and dehydration-inducible transcription. The chain is Dehydration-responsive element-binding protein 1J (DREB1J) from Oryza sativa subsp. indica (Rice).